Consider the following 360-residue polypeptide: MFVARSIAADHKDLIHDVSFDFHGRRMATCSSDQSVKVWDKSESGEWHCTASWKTHSGSVWRVTWAHPEFGQVLASCSFDRTAAVWEEIVGESNDKLRGQSHWVKRTTLVDSRTSVTDVKFAPKHMGLMLATCSADGIVRIYEAPDVMNLSQWSLQHEISCKLSCSCISWNPSSSRAHAPMIAVGSDDSSPNAMAKVQIFEYNENTRKYAKAETLLTVTDPVHDIAFAPNLGRSFHILAIATKDVRIFTLKPVRKELTSSGGPTKFEIHIVAQFDNHNSQVWRVSWNITGTVLASSGDDGCVRLWKANYMDNWKCTGILKGNGSPVNGSSQQGNSNPSVGSNIPSLQNSLNGSSAGRKHS.

WD repeat units lie at residues 10–49, 55–96, 111–152, 160–210, 217–258, and 276–315; these read DHKDLIHDVSFDFHGRRMATCSSDQSVKVWDKSESGEWHC, THSG…SNDK, DSRT…NLSQ, SCKL…RKYA, TVTD…KELT, and NHNSQVWRVSWNITGTVLASSGDDGCVRLWKANYMDNWKC. Lys-12 is covalently cross-linked (Glycyl lysine isopeptide (Lys-Gly) (interchain with G-Cter in SUMO2)). Ser-190 carries the phosphoserine modification. Residues 324-342 show a composition bias toward low complexity; it reads SPVNGSSQQGNSNPSVGSN. Positions 324–360 are disordered; that stretch reads SPVNGSSQQGNSNPSVGSNIPSLQNSLNGSSAGRKHS. A compositionally biased stretch (polar residues) spans 343–354; it reads IPSLQNSLNGSS.

It belongs to the WD repeat SEC13 family. As to quaternary structure, component of the Nup107-160 subcomplex of the nuclear pore complex (NPC). The Nup107-160 subcomplex includes NUP160, NUP133, NUP107, NUP98, NUP85, NUP43, NUP37, SEH1 and SEC13. The SEH1 subunit appears to be only weakly associated with the Nup107-160 subcomplex. Component of the GATOR2 subcomplex, composed of MIOS, SEC13, SEH1L, WDR24 and WDR59. The GATOR2 complex interacts with CASTOR1 and CASTOR2; the interaction is negatively regulated by arginine. The GATOR2 complex interacts with SESN1, SESN2 and SESN3; the interaction is negatively regulated by amino acids. SESN1, SESN2 and SESN3 convey leucine availability via direct interaction with SEH1L and WDR24.

It localises to the chromosome. Its subcellular location is the centromere. The protein localises to the kinetochore. The protein resides in the nucleus. It is found in the nuclear pore complex. It localises to the lysosome membrane. Its activity is regulated as follows. The GATOR2 complex is negatively regulated by the upstream amino acid sensors CASTOR1 and SESN2, which sequester the GATOR2 complex in absence of amino acids. In the presence of abundant amino acids, GATOR2 is released from CASTOR1 and SESN2 and activated. Component of the Nup107-160 subcomplex of the nuclear pore complex (NPC). The Nup107-160 subcomplex is required for the assembly of a functional NPC. The Nup107-160 subcomplex is also required for normal kinetochore microtubule attachment, mitotic progression and chromosome segregation. This subunit plays a role in recruitment of the Nup107-160 subcomplex to the kinetochore. In terms of biological role, as a component of the GATOR2 complex, functions as an activator of the amino acid-sensing branch of the mTORC1 signaling pathway. The GATOR2 complex indirectly activates mTORC1 through the inhibition of the GATOR1 subcomplex. GATOR2 probably acts as an E3 ubiquitin-protein ligase toward GATOR1. In the presence of abundant amino acids, the GATOR2 complex mediates ubiquitination of the NPRL2 core component of the GATOR1 complex, leading to GATOR1 inactivation. In the absence of amino acids, GATOR2 is inhibited, activating the GATOR1 complex. Within the GATOR2 complex, SEC13 and SEH1L are required to stabilize the complex. The polypeptide is Nucleoporin SEH1 (SEH1L) (Bos taurus (Bovine)).